A 174-amino-acid chain; its full sequence is CASP-like protein 4D2 (174 aa).

Residues 1–14 lie on the Cytoplasmic side of the membrane; sequence MAPPPPSPPAVSLK. The helical transmembrane segment at 15 to 35 threads the bilayer; sequence VLLLLLRVLTGVFLVIALIIL. At 36–60 the chain is on the extracellular side; that stretch reads STNSVTIVSQGSALKFHFKDVYAYR. A helical transmembrane segment spans residues 61-81; that stretch reads YMLSAAVIGLVYAVIQLFFTI. The Cytoplasmic portion of the chain corresponds to 82–97; that stretch reads SEFATGVKNPFNYQLD. The helical transmembrane segment at 98–118 threads the bilayer; the sequence is FYGDKLISYLVATGSAAGFGV. Residues 119–150 are Extracellular-facing; it reads TKDLKDTFLALVALDSTDPVDKFFSKGYASAS. Residues 151–171 traverse the membrane as a helical segment; the sequence is LLLFAFICLAVLSVFSSFAMA. The Cytoplasmic portion of the chain corresponds to 172–174; it reads KRN.

Belongs to the Casparian strip membrane proteins (CASP) family. In terms of assembly, homodimer and heterodimers.

The protein resides in the cell membrane. This is CASP-like protein 4D2 from Arabidopsis thaliana (Mouse-ear cress).